The sequence spans 271 residues: Sulfur carrier protein adenylyltransferase (271 aa).

Residues Arg-13, Gly-40, Glu-61, Arg-72, Lys-85, Leu-109, and 129–133 (DNFPT) each bind ATP. Residues Cys-175 and Cys-178 each contribute to the Zn(2+) site. A Glycyl cysteine thioester (Cys-Gly) (interchain with G-Cter in TtuB) cross-link involves residue Cys-192. The Zn(2+) site is built by Cys-249 and Cys-252.

It belongs to the HesA/MoeB/ThiF family. Zn(2+) serves as cofactor. Post-translationally, conjugated to TtuB via a covalent linkage that likely involves a lysine residue. Is able to form a covalent thioester adduct with TtuB via Cys-192 in vitro.

It catalyses the reaction [molybdopterin-synthase sulfur-carrier protein]-C-terminal Gly-Gly + ATP + H(+) = [molybdopterin-synthase sulfur-carrier protein]-C-terminal Gly-Gly-AMP + diphosphate. The enzyme catalyses [ThiS sulfur-carrier protein]-C-terminal Gly-Gly + ATP + H(+) = [ThiS sulfur-carrier protein]-C-terminal Gly-Gly-AMP + diphosphate. It carries out the reaction [TtuB sulfur-carrier protein]-C-terminal Gly-Gly + ATP + H(+) = [TtuB sulfur-carrier protein]-C-terminal Gly-Gly-AMP + diphosphate. Its pathway is tRNA modification. It functions in the pathway cofactor biosynthesis; thiamine diphosphate biosynthesis. It participates in cofactor biosynthesis; molybdopterin biosynthesis. Enzymatic activity may be regulated by TtuB conjugation. Its function is as follows. Adenylyltransferase involved in the biosynthesis of several sulfur compounds. Is required for the 2-thiolation of 5-methyluridine residue at position 54 in the T loop of tRNAs, leading to 5-methyl-2-thiouridine (m(5)s(2)U or s(2)T). This modification allows thermal stabilization of tRNAs in thermophilic microorganisms, and is essential for cell growth at high temperatures. TtuC catalyzes the adenylation by ATP of the carboxyl group of the C-terminal glycine of sulfur carrier protein TtuB. Is also involved in the biosynthesis of thiamine, molybdenum cofactor (Moco) and probably tungsten cofactor (Wco), by adenylating the sulfur carriers ThiS and MoaD. Is required for the conjugation of TtuB to target proteins. In Thermus thermophilus (strain ATCC BAA-163 / DSM 7039 / HB27), this protein is Sulfur carrier protein adenylyltransferase.